The sequence spans 583 residues: Arginine--tRNA ligase (583 aa).

A 'HIGH' region motif is present at residues 121–131 (ANPTGPLHLGH).

It belongs to the class-I aminoacyl-tRNA synthetase family. As to quaternary structure, monomer.

It is found in the cytoplasm. The catalysed reaction is tRNA(Arg) + L-arginine + ATP = L-arginyl-tRNA(Arg) + AMP + diphosphate. This Aquifex aeolicus (strain VF5) protein is Arginine--tRNA ligase (argS).